The chain runs to 275 residues: LexA repressor (275 aa).

The disordered stretch occupies residues 1 to 50 (MKRSTPRPARSQAALTTSSEESPDRVERGGDGVATVTDFPDGPPDETGLT). Positions 73–93 (MREIGEAVGLTSTSSVAHQLM) form a DNA-binding region, H-T-H motif. Residues 114 to 151 (RSAESAVPDASAGHSPAADRAPSARRPPRGPSPIDSNP) are disordered. Active-site for autocatalytic cleavage activity residues include Ser199 and Lys236.

This sequence belongs to the peptidase S24 family. Homodimer.

It carries out the reaction Hydrolysis of Ala-|-Gly bond in repressor LexA.. Represses a number of genes involved in the response to DNA damage (SOS response), including recA and lexA. In the presence of single-stranded DNA, RecA interacts with LexA causing an autocatalytic cleavage which disrupts the DNA-binding part of LexA, leading to derepression of the SOS regulon and eventually DNA repair. The chain is LexA repressor from Acidothermus cellulolyticus (strain ATCC 43068 / DSM 8971 / 11B).